Reading from the N-terminus, the 182-residue chain is Probable RNA 2'-phosphotransferase (182 aa).

This sequence belongs to the KptA/TPT1 family.

Functionally, removes the 2'-phosphate from RNA via an intermediate in which the phosphate is ADP-ribosylated by NAD followed by a presumed transesterification to release the RNA and generate ADP-ribose 1''-2''-cyclic phosphate (APPR&gt;P). May function as an ADP-ribosylase. This is Probable RNA 2'-phosphotransferase from Flavobacterium johnsoniae (strain ATCC 17061 / DSM 2064 / JCM 8514 / BCRC 14874 / CCUG 350202 / NBRC 14942 / NCIMB 11054 / UW101) (Cytophaga johnsonae).